Consider the following 393-residue polypeptide: Dual-specificity RNA methyltransferase RlmN (393 aa).

Glutamate 114 serves as the catalytic Proton acceptor. The Radical SAM core domain occupies 120–359 (EDDRATLCVS…VIVRKTRGDD (240 aa)). Cysteine 127 and cysteine 364 are disulfide-bonded. [4Fe-4S] cluster-binding residues include cysteine 134, cysteine 138, and cysteine 141. Residues 188–189 (GE), serine 220, 242–244 (SLH), and asparagine 321 each bind S-adenosyl-L-methionine. Cysteine 364 acts as the S-methylcysteine intermediate in catalysis.

Belongs to the radical SAM superfamily. RlmN family. Requires [4Fe-4S] cluster as cofactor.

Its subcellular location is the cytoplasm. The catalysed reaction is adenosine(2503) in 23S rRNA + 2 reduced [2Fe-2S]-[ferredoxin] + 2 S-adenosyl-L-methionine = 2-methyladenosine(2503) in 23S rRNA + 5'-deoxyadenosine + L-methionine + 2 oxidized [2Fe-2S]-[ferredoxin] + S-adenosyl-L-homocysteine. It catalyses the reaction adenosine(37) in tRNA + 2 reduced [2Fe-2S]-[ferredoxin] + 2 S-adenosyl-L-methionine = 2-methyladenosine(37) in tRNA + 5'-deoxyadenosine + L-methionine + 2 oxidized [2Fe-2S]-[ferredoxin] + S-adenosyl-L-homocysteine. Specifically methylates position 2 of adenine 2503 in 23S rRNA and position 2 of adenine 37 in tRNAs. m2A2503 modification seems to play a crucial role in the proofreading step occurring at the peptidyl transferase center and thus would serve to optimize ribosomal fidelity. The chain is Dual-specificity RNA methyltransferase RlmN from Actinobacillus pleuropneumoniae serotype 3 (strain JL03).